The following is a 159-amino-acid chain: Transcriptional repressor NrdR (159 aa).

Residues 3-34 (CPTCQNTDSRVLESRSADTGKSVRRRRECLNC) fold into a zinc finger. Positions 49 to 139 (ISVLKKDGSR…VYRKFNGVKD (91 aa)) constitute an ATP-cone domain.

This sequence belongs to the NrdR family. It depends on Zn(2+) as a cofactor.

Its function is as follows. Negatively regulates transcription of bacterial ribonucleotide reductase nrd genes and operons by binding to NrdR-boxes. This Prochlorococcus marinus (strain MIT 9515) protein is Transcriptional repressor NrdR.